The following is a 203-amino-acid chain: V-type ATP synthase subunit D (203 aa).

The protein belongs to the V-ATPase D subunit family.

Functionally, produces ATP from ADP in the presence of a proton gradient across the membrane. The chain is V-type ATP synthase subunit D from Chlamydia trachomatis serovar L2 (strain ATCC VR-902B / DSM 19102 / 434/Bu).